The following is a 224-amino-acid chain: UPF0758 protein Patl_0046 (224 aa).

The MPN domain occupies 102–224; it reads VFNSAQQTKH…AVSFAERGLI (123 aa). H173, H175, and D186 together coordinate Zn(2+). The JAMM motif motif lies at 173–186; the sequence is HNHPSGVAEPSQAD.

It belongs to the UPF0758 family.

The sequence is that of UPF0758 protein Patl_0046 from Pseudoalteromonas atlantica (strain T6c / ATCC BAA-1087).